Reading from the N-terminus, the 160-residue chain is Small ribosomal subunit protein uS17m (160 aa).

It belongs to the universal ribosomal protein uS17 family. In terms of assembly, component of the mitochondrial ribosome small subunit (28S) which comprises a 12S rRNA and about 30 distinct proteins.

It is found in the mitochondrion. The sequence is that of Small ribosomal subunit protein uS17m (mrps-17) from Caenorhabditis elegans.